We begin with the raw amino-acid sequence, 132 residues long: Large ribosomal subunit protein uL14 (132 aa).

This sequence belongs to the universal ribosomal protein uL14 family. In terms of assembly, part of the 50S ribosomal subunit. Forms a cluster with proteins L3 and L24e, part of which may contact the 16S rRNA in 2 intersubunit bridges.

Binds to 23S rRNA. Forms part of two intersubunit bridges in the 70S ribosome. This is Large ribosomal subunit protein uL14 from Halorubrum lacusprofundi (strain ATCC 49239 / DSM 5036 / JCM 8891 / ACAM 34).